Consider the following 220-residue polypeptide: MQGQDLAMLPEIRLMGDVDVAALSPLFRGMVMTVSYAETQGGIGLTASGAMNRKFVHWAAVHFDWPGHTSDDLYSVSKVLNEADMPPLLVVRDMLKHLRLLRRRKDVLVPTQRGRDFLVRPQAFFDLIATDYLYAYIHYGQTREAVRNRMRWWHVFLNLINMKAETGCSLDDLANELYPSESYPEPAEMTVETWAERSALRYDSFARCAGWDCCTKSARG.

This is an uncharacterized protein from Sinorhizobium fredii (strain NBRC 101917 / NGR234).